The chain runs to 757 residues: Protein hunchback (757 aa).

2 disordered regions span residues 30–51 (EPGH…PIPS) and 171–213 (EKLQ…EDMK). Polar residues predominate over residues 39 to 51 (SVASSPRQSPIPS). The span at 197-213 (EPEKEHDQMSNSSEDMK) shows a compositional bias: basic and acidic residues. C2H2-type zinc fingers lie at residues 239 to 261 (YKCK…TRTH), 268 to 290 (LQCP…IRKH), 296 to 318 (FQCD…RKSH), and 324 to 348 (YRCA…KYGH). Disordered stretches follow at residues 367-416 (DVYG…VATS), 511-535 (EQLQ…YERK), and 602-694 (MTSP…APPS). 2 stretches are compositionally biased toward low complexity: residues 397-414 (VAAV…QPVA) and 512-521 (QLQQQNQQQS). The span at 522-531 (DNEEEDQDDE) shows a compositional bias: acidic residues. The span at 651-694 (ANTSASSTASSSGNSSNASSNSNGNSSSNSSSNGTTSAVAAPPS) shows a compositional bias: low complexity. 2 consecutive C2H2-type zinc fingers follow at residues 704-726 (YECK…MGYH) and 732-756 (FKCN…RNAH).

This sequence belongs to the hunchback C2H2-type zinc-finger protein family.

The protein resides in the nucleus. Gap class segmentation protein that controls development of head structures. The polypeptide is Protein hunchback (hb) (Drosophila sechellia (Fruit fly)).